The sequence spans 208 residues: Uridine kinase (208 aa).

ATP is bound at residue glycine 12–threonine 19.

The protein belongs to the uridine kinase family.

It localises to the cytoplasm. The catalysed reaction is uridine + ATP = UMP + ADP + H(+). It catalyses the reaction cytidine + ATP = CMP + ADP + H(+). It functions in the pathway pyrimidine metabolism; CTP biosynthesis via salvage pathway; CTP from cytidine: step 1/3. Its pathway is pyrimidine metabolism; UMP biosynthesis via salvage pathway; UMP from uridine: step 1/1. The chain is Uridine kinase from Streptococcus pyogenes serotype M18 (strain MGAS8232).